We begin with the raw amino-acid sequence, 337 residues long: Ketol-acid reductoisomerase (NADP(+)) (337 aa).

In terms of domain architecture, KARI N-terminal Rossmann spans Met1–Thr180. NADP(+) is bound by residues Tyr24–Gln27, Arg47, and Ser51. His106 is a catalytic residue. NADP(+) is bound at residue Gly132. Residues Thr181–Ile326 enclose the KARI C-terminal knotted domain. 4 residues coordinate Mg(2+): Asp189, Glu193, Glu225, and Glu229. Residue Ser250 participates in substrate binding.

It belongs to the ketol-acid reductoisomerase family. Mg(2+) is required as a cofactor.

It carries out the reaction (2R)-2,3-dihydroxy-3-methylbutanoate + NADP(+) = (2S)-2-acetolactate + NADPH + H(+). The catalysed reaction is (2R,3R)-2,3-dihydroxy-3-methylpentanoate + NADP(+) = (S)-2-ethyl-2-hydroxy-3-oxobutanoate + NADPH + H(+). It participates in amino-acid biosynthesis; L-isoleucine biosynthesis; L-isoleucine from 2-oxobutanoate: step 2/4. It functions in the pathway amino-acid biosynthesis; L-valine biosynthesis; L-valine from pyruvate: step 2/4. In terms of biological role, involved in the biosynthesis of branched-chain amino acids (BCAA). Catalyzes an alkyl-migration followed by a ketol-acid reduction of (S)-2-acetolactate (S2AL) to yield (R)-2,3-dihydroxy-isovalerate. In the isomerase reaction, S2AL is rearranged via a Mg-dependent methyl migration to produce 3-hydroxy-3-methyl-2-ketobutyrate (HMKB). In the reductase reaction, this 2-ketoacid undergoes a metal-dependent reduction by NADPH to yield (R)-2,3-dihydroxy-isovalerate. In Neisseria meningitidis serogroup C (strain 053442), this protein is Ketol-acid reductoisomerase (NADP(+)).